Here is a 270-residue protein sequence, read N- to C-terminus: MAASSSGEKEKERLGGGLGVAGGNSTRERLLSALEDLEVLSRELIEMLAISRNQKLLQAGEENQVLELLIHRDGEFQELMKLALNQGKIHHEMQVLEKEVEKRDSDIQQLQKQLKEAEQILATAVYQAKEKLKSIEKARKGAISSEEIIKYAHRISASNAVCAPLTWVPGDPRRPYPTDLEMRSGLLGQMNNPSTNGVNGHLPGDALAAGRLPDVLAPQYPWQSNDMSMNMLPPNHSSDFLLEPPGHNKENEDDVEIMSTDSSSSSSESD.

The segment at M1–G22 is disordered. A2 carries the post-translational modification N-acetylalanine. Coiled-coil stretches lie at residues N24 to L48 and H90 to K131. S32 carries the post-translational modification Phosphoserine. Residues D226 to D270 form a disordered region. The segment covering S259–D270 has biased composition (low complexity).

It belongs to the Mediator complex subunit 4 family. In terms of assembly, component of the Mediator complex, which is composed of MED1, MED4, MED6, MED7, MED8, MED9, MED10, MED11, MED12, MED13, MED13L, MED14, MED15, MED16, MED17, MED18, MED19, MED20, MED21, MED22, MED23, MED24, MED25, MED26, MED27, MED29, MED30, MED31, CCNC, CDK8 and CDC2L6/CDK11. The MED12, MED13, CCNC and CDK8 subunits form a distinct module termed the CDK8 module. Mediator containing the CDK8 module is less active than Mediator lacking this module in supporting transcriptional activation. Individual preparations of the Mediator complex lacking one or more distinct subunits have been variously termed ARC, CRSP, DRIP, PC2, SMCC and TRAP.

Its subcellular location is the nucleus. Component of the Mediator complex, a coactivator involved in the regulated transcription of nearly all RNA polymerase II-dependent genes. Mediator functions as a bridge to convey information from gene-specific regulatory proteins to the basal RNA polymerase II transcription machinery. Mediator is recruited to promoters by direct interactions with regulatory proteins and serves as a scaffold for the assembly of a functional preinitiation complex with RNA polymerase II and the general transcription factors. In Homo sapiens (Human), this protein is Mediator of RNA polymerase II transcription subunit 4 (MED4).